Here is a 398-residue protein sequence, read N- to C-terminus: S-adenosylmethionine synthase (398 aa).

Residue 136-141 participates in ATP binding; the sequence is GTGSSD.

The protein belongs to the AdoMet synthase 2 family. The cofactor is Mg(2+).

It catalyses the reaction L-methionine + ATP + H2O = S-adenosyl-L-methionine + phosphate + diphosphate. The protein operates within amino-acid biosynthesis; S-adenosyl-L-methionine biosynthesis; S-adenosyl-L-methionine from L-methionine: step 1/1. Functionally, catalyzes the formation of S-adenosylmethionine from methionine and ATP. This chain is S-adenosylmethionine synthase, found in Methanosarcina barkeri (strain Fusaro / DSM 804).